A 555-amino-acid chain; its full sequence is Oxamate carbamoyltransferase subunit AllF (555 aa).

It belongs to the AllF family. As to quaternary structure, the OXTCase is composed of 3 subunits, AllF, AllG and AllH. Mg(2+) is required as a cofactor.

The enzyme catalyses oxamate + carbamoyl phosphate = N-carbamoyl-2-oxoglycine + phosphate. It functions in the pathway nitrogen metabolism; (S)-allantoin degradation. In terms of biological role, component of a carbamoyltransferase involved in the anaerobic nitrogen utilization via the assimilation of allantoin. Catalyzes the conversion of oxalurate (N-carbamoyl-2-oxoglycine) to oxamate and carbamoyl phosphate. The protein is Oxamate carbamoyltransferase subunit AllF of Escherichia coli (strain K12).